The chain runs to 308 residues: F420-non-reducing hydrogenase subunit G (308 aa).

The protein belongs to the [NiFe]/[NiFeSe] hydrogenase small subunit family. In terms of assembly, the F420-non-reducing hydrogenase is composed of three subunits; MvhA, MvhD and MvhG. It forms a complex with the heterodisulfide reductase (hdr).

In terms of biological role, part of a complex that provides reducing equivalents for heterodisulfide reductase. The chain is F420-non-reducing hydrogenase subunit G (mvhG) from Methanothermobacter thermautotrophicus (strain ATCC 29096 / DSM 1053 / JCM 10044 / NBRC 100330 / Delta H) (Methanobacterium thermoautotrophicum).